The primary structure comprises 379 residues: Flap endonuclease 1 (379 aa).

Positions 1–105 (MGIKGLTKLL…QELAKRYSKR (105 aa)) are N-domain. Residue Asp-34 participates in Mg(2+) binding. Arg-71 lines the DNA pocket. Mg(2+)-binding residues include Asp-87, Glu-159, Glu-161, Asp-180, and Asp-182. The I-domain stretch occupies residues 123–254 (AIEKLSKRTV…QTALKLIRQH (132 aa)). A DNA-binding site is contributed by Glu-159. Positions 232 and 234 each coordinate DNA. A Mg(2+)-binding site is contributed by Asp-234. The tract at residues 331–379 (AKNKSSQGRLESFFKPTATTSAPLKRKETSDKTSKAAANKKTKAGGKKK) is disordered. Residues 336 to 344 (SQGRLESFF) form an interaction with PCNA region. Residues 355 to 364 (KRKETSDKTS) show a composition bias toward basic and acidic residues. The span at 368 to 379 (ANKKTKAGGKKK) shows a compositional bias: basic residues.

It belongs to the XPG/RAD2 endonuclease family. FEN1 subfamily. In terms of assembly, interacts with PCNA. Three molecules of FEN1 bind to one PCNA trimer with each molecule binding to one PCNA monomer. PCNA stimulates the nuclease activity without altering cleavage specificity. Mg(2+) is required as a cofactor. In terms of processing, phosphorylated. Phosphorylation upon DNA damage induces relocalization to the nuclear plasma.

Its subcellular location is the nucleus. The protein localises to the nucleolus. It is found in the nucleoplasm. The protein resides in the mitochondrion. In terms of biological role, structure-specific nuclease with 5'-flap endonuclease and 5'-3' exonuclease activities involved in DNA replication and repair. During DNA replication, cleaves the 5'-overhanging flap structure that is generated by displacement synthesis when DNA polymerase encounters the 5'-end of a downstream Okazaki fragment. It enters the flap from the 5'-end and then tracks to cleave the flap base, leaving a nick for ligation. Also involved in the long patch base excision repair (LP-BER) pathway, by cleaving within the apurinic/apyrimidinic (AP) site-terminated flap. Acts as a genome stabilization factor that prevents flaps from equilibrating into structures that lead to duplications and deletions. Also possesses 5'-3' exonuclease activity on nicked or gapped double-stranded DNA, and exhibits RNase H activity. Also involved in replication and repair of rDNA and in repairing mitochondrial DNA. The protein is Flap endonuclease 1 of Zea mays (Maize).